The chain runs to 201 residues: Retinol-binding protein 4 (201 aa).

The first 18 residues, Met-1 to Ala-18, serve as a signal peptide directing secretion. Intrachain disulfides connect Cys-22–Cys-178, Cys-88–Cys-192, and Cys-138–Cys-147. Gln-116 is a substrate binding site. Arg-139 carries the post-translational modification Omega-N-methylarginine.

This sequence belongs to the calycin superfamily. Lipocalin family. Interacts with TTR. Interaction with TTR prevents its loss by filtration through the kidney glomeruli. Interacts with STRA6.

The protein resides in the secreted. Functionally, retinol-binding protein that mediates retinol transport in blood plasma. Delivers retinol from the liver stores to the peripheral tissues. Transfers the bound all-trans retinol to STRA6, that then facilitates retinol transport across the cell membrane. The sequence is that of Retinol-binding protein 4 (RBP4) from Equus caballus (Horse).